The following is a 291-amino-acid chain: tRNA U34 carboxymethyltransferase (291 aa).

Carboxy-S-adenosyl-L-methionine is bound by residues lysine 61, tryptophan 75, lysine 80, glycine 100, 122–124, tyrosine 169, and arginine 284; that span reads DPS.

It belongs to the class I-like SAM-binding methyltransferase superfamily. CmoB family. In terms of assembly, homotetramer.

It carries out the reaction carboxy-S-adenosyl-L-methionine + 5-hydroxyuridine(34) in tRNA = 5-carboxymethoxyuridine(34) in tRNA + S-adenosyl-L-homocysteine + H(+). Catalyzes carboxymethyl transfer from carboxy-S-adenosyl-L-methionine (Cx-SAM) to 5-hydroxyuridine (ho5U) to form 5-carboxymethoxyuridine (cmo5U) at position 34 in tRNAs. In Campylobacter lari (strain RM2100 / D67 / ATCC BAA-1060), this protein is tRNA U34 carboxymethyltransferase.